A 385-amino-acid polypeptide reads, in one-letter code: Putative glutamate--cysteine ligase 2 (385 aa).

It belongs to the glutamate--cysteine ligase type 2 family. YbdK subfamily.

It catalyses the reaction L-cysteine + L-glutamate + ATP = gamma-L-glutamyl-L-cysteine + ADP + phosphate + H(+). ATP-dependent carboxylate-amine ligase which exhibits weak glutamate--cysteine ligase activity. The sequence is that of Putative glutamate--cysteine ligase 2 from Solibacter usitatus (strain Ellin6076).